A 659-amino-acid chain; its full sequence is Ion-translocating oxidoreductase complex subunit C (659 aa).

4Fe-4S ferredoxin-type domains follow at residues 366–397 (TEMG…QQLY) and 407–436 (KARN…VQYY). [4Fe-4S] cluster-binding residues include Cys-377, Cys-380, Cys-383, Cys-387, Cys-416, Cys-419, Cys-422, and Cys-426.

It belongs to the 4Fe4S bacterial-type ferredoxin family. RnfC subfamily. As to quaternary structure, the complex is composed of six subunits: RnfA, RnfB, RnfC, RnfD, RnfE and RnfG. Requires [4Fe-4S] cluster as cofactor.

The protein localises to the cell inner membrane. In terms of biological role, part of a membrane-bound complex that couples electron transfer with translocation of ions across the membrane. In Yersinia pestis bv. Antiqua (strain Nepal516), this protein is Ion-translocating oxidoreductase complex subunit C.